A 341-amino-acid chain; its full sequence is Paired box protein Pax-9 (341 aa).

Residues 4–130 constitute a DNA-binding region (paired); it reads AFGEVNQLGG…SSISRILRNK (127 aa). The tract at residues 7 to 63 is PAI subdomain; that stretch reads EVNQLGGVFVNGRPLPNAIRLRIVELAQLGIRPCDISRQLRVSHGCVSKILARYNET. The segment at 82-130 is RED subdomain; it reads TVVKHIRTYKQRDPGIFAWEIRDRLLADGVCDKYNVPSVSSISRILRNK. Positions 168–189 are interaction with KDM5B; it reads AAAAKVPTPPGVPAIPGSVAMP.

Interacts with KDM5B.

Its subcellular location is the nucleus. In terms of biological role, transcription factor required for normal development of thymus, parathyroid glands, ultimobranchial bodies, teeth, skeletal elements of skull and larynx as well as distal limbs. The protein is Paired box protein Pax-9 (PAX9) of Daubentonia madagascariensis (Aye-aye).